The following is a 427-amino-acid chain: Glutamate-1-semialdehyde 2,1-aminomutase (427 aa).

Lysine 268 bears the N6-(pyridoxal phosphate)lysine mark.

This sequence belongs to the class-III pyridoxal-phosphate-dependent aminotransferase family. HemL subfamily. Requires pyridoxal 5'-phosphate as cofactor.

It localises to the cytoplasm. The catalysed reaction is (S)-4-amino-5-oxopentanoate = 5-aminolevulinate. It participates in porphyrin-containing compound metabolism; protoporphyrin-IX biosynthesis; 5-aminolevulinate from L-glutamyl-tRNA(Glu): step 2/2. This chain is Glutamate-1-semialdehyde 2,1-aminomutase, found in Methanococcus maripaludis (strain C6 / ATCC BAA-1332).